We begin with the raw amino-acid sequence, 393 residues long: Chalcone synthase 2 (393 aa).

The active site involves Cys166.

It belongs to the thiolase-like superfamily. Chalcone/stilbene synthases family.

The enzyme catalyses (E)-4-coumaroyl-CoA + 3 malonyl-CoA + 3 H(+) = 2',4,4',6'-tetrahydroxychalcone + 3 CO2 + 4 CoA. The protein operates within secondary metabolite biosynthesis; flavonoid biosynthesis. In terms of biological role, the primary product of this enzyme is 4,2',4',6'-tetrahydroxychalcone (also termed naringenin-chalcone or chalcone) which can under specific conditions spontaneously isomerize into naringenin. The protein is Chalcone synthase 2 (CHS2) of Ruta graveolens (Common rue).